Reading from the N-terminus, the 271-residue chain is Tropinone reductase homolog At2g29360 (271 aa).

Position 22–46 (22–46 (LVTGGSKGIGEAVVEELATLGARIH)) interacts with NADP(+). Residue serine 155 coordinates substrate. The active-site Proton acceptor is tyrosine 168.

It belongs to the short-chain dehydrogenases/reductases (SDR) family. SDR65C subfamily.

Functionally, oxidoreductase active on cyclic ketones, but not on tropinone or nortropinone. This chain is Tropinone reductase homolog At2g29360, found in Arabidopsis thaliana (Mouse-ear cress).